The following is a 460-amino-acid chain: Bifunctional protein GlmU (460 aa).

Residues 1–229 (MTNYAIILAA…FNESLGVNDR (229 aa)) are pyrophosphorylase. Residues 8–11 (LAAG), Lys-22, Gln-72, and 77–78 (GT) each bind UDP-N-acetyl-alpha-D-glucosamine. A Mg(2+)-binding site is contributed by Asp-102. The UDP-N-acetyl-alpha-D-glucosamine site is built by Gly-139, Glu-154, Asn-169, and Asn-227. Asn-227 is a binding site for Mg(2+). The interval 230 to 250 (VALATAETVMRQRITQKHMVN) is linker. Residues 251–460 (GVTFQNPETV…RLAHHPSRSK (210 aa)) are N-acetyltransferase. Residues Arg-332 and Lys-350 each coordinate UDP-N-acetyl-alpha-D-glucosamine. The Proton acceptor role is filled by His-362. Tyr-365 and Asn-376 together coordinate UDP-N-acetyl-alpha-D-glucosamine. Acetyl-CoA is bound by residues Ala-379, 385–386 (NY), Ser-404, Ala-422, and Arg-439.

In the N-terminal section; belongs to the N-acetylglucosamine-1-phosphate uridyltransferase family. It in the C-terminal section; belongs to the transferase hexapeptide repeat family. In terms of assembly, homotrimer. Mg(2+) serves as cofactor.

The protein localises to the cytoplasm. The enzyme catalyses alpha-D-glucosamine 1-phosphate + acetyl-CoA = N-acetyl-alpha-D-glucosamine 1-phosphate + CoA + H(+). It carries out the reaction N-acetyl-alpha-D-glucosamine 1-phosphate + UTP + H(+) = UDP-N-acetyl-alpha-D-glucosamine + diphosphate. The protein operates within nucleotide-sugar biosynthesis; UDP-N-acetyl-alpha-D-glucosamine biosynthesis; N-acetyl-alpha-D-glucosamine 1-phosphate from alpha-D-glucosamine 6-phosphate (route II): step 2/2. It functions in the pathway nucleotide-sugar biosynthesis; UDP-N-acetyl-alpha-D-glucosamine biosynthesis; UDP-N-acetyl-alpha-D-glucosamine from N-acetyl-alpha-D-glucosamine 1-phosphate: step 1/1. Its pathway is bacterial outer membrane biogenesis; LPS lipid A biosynthesis. Its function is as follows. Catalyzes the last two sequential reactions in the de novo biosynthetic pathway for UDP-N-acetylglucosamine (UDP-GlcNAc). The C-terminal domain catalyzes the transfer of acetyl group from acetyl coenzyme A to glucosamine-1-phosphate (GlcN-1-P) to produce N-acetylglucosamine-1-phosphate (GlcNAc-1-P), which is converted into UDP-GlcNAc by the transfer of uridine 5-monophosphate (from uridine 5-triphosphate), a reaction catalyzed by the N-terminal domain. This is Bifunctional protein GlmU from Streptococcus pyogenes serotype M6 (strain ATCC BAA-946 / MGAS10394).